We begin with the raw amino-acid sequence, 142 residues long: Protein archease (142 aa).

Ca(2+) is bound by residues D12 and D141.

It belongs to the archease family.

Functionally, activates the tRNA-splicing ligase complex by facilitating the enzymatic turnover of catalytic subunit RtcB. Acts by promoting the guanylylation of RtcB, a key intermediate step in tRNA ligation. Can also alter the NTP specificity of RtcB such that ATP, dGTP or ITP is used efficiently. The chain is Protein archease from Thermococcus kodakarensis (strain ATCC BAA-918 / JCM 12380 / KOD1) (Pyrococcus kodakaraensis (strain KOD1)).